The sequence spans 735 residues: Phosphoribosylformylglycinamidine synthase subunit PurL (735 aa).

The active site involves His-49. Tyr-52 and Lys-91 together coordinate ATP. Position 93 (Glu-93) interacts with Mg(2+). Substrate contacts are provided by residues 94-97 (SHNH) and Arg-116. The active-site Proton acceptor is the His-95. A Mg(2+)-binding site is contributed by Asp-117. Gln-240 contacts substrate. A Mg(2+)-binding site is contributed by Asp-268. 312-314 (ESQ) serves as a coordination point for substrate. Residues Asp-493 and Gly-530 each contribute to the ATP site. A Mg(2+)-binding site is contributed by Asn-531. Ser-533 contacts substrate.

Belongs to the FGAMS family. In terms of assembly, monomer. Part of the FGAM synthase complex composed of 1 PurL, 1 PurQ and 2 PurS subunits.

The protein localises to the cytoplasm. The catalysed reaction is N(2)-formyl-N(1)-(5-phospho-beta-D-ribosyl)glycinamide + L-glutamine + ATP + H2O = 2-formamido-N(1)-(5-O-phospho-beta-D-ribosyl)acetamidine + L-glutamate + ADP + phosphate + H(+). The protein operates within purine metabolism; IMP biosynthesis via de novo pathway; 5-amino-1-(5-phospho-D-ribosyl)imidazole from N(2)-formyl-N(1)-(5-phospho-D-ribosyl)glycinamide: step 1/2. Part of the phosphoribosylformylglycinamidine synthase complex involved in the purines biosynthetic pathway. Catalyzes the ATP-dependent conversion of formylglycinamide ribonucleotide (FGAR) and glutamine to yield formylglycinamidine ribonucleotide (FGAM) and glutamate. The FGAM synthase complex is composed of three subunits. PurQ produces an ammonia molecule by converting glutamine to glutamate. PurL transfers the ammonia molecule to FGAR to form FGAM in an ATP-dependent manner. PurS interacts with PurQ and PurL and is thought to assist in the transfer of the ammonia molecule from PurQ to PurL. This is Phosphoribosylformylglycinamidine synthase subunit PurL from Azorhizobium caulinodans (strain ATCC 43989 / DSM 5975 / JCM 20966 / LMG 6465 / NBRC 14845 / NCIMB 13405 / ORS 571).